Here is a 452-residue protein sequence, read N- to C-terminus: Pup--protein ligase (452 aa).

Position 9 (Glu-9) interacts with Mg(2+). Arg-53 provides a ligand contact to ATP. Residue Tyr-55 coordinates Mg(2+). Catalysis depends on Asp-57, which acts as the Proton acceptor. Glu-63 is a binding site for Mg(2+). Thr-66 and Trp-419 together coordinate ATP.

It belongs to the Pup ligase/Pup deamidase family. Pup-conjugating enzyme subfamily.

The catalysed reaction is ATP + [prokaryotic ubiquitin-like protein]-L-glutamate + [protein]-L-lysine = ADP + phosphate + N(6)-([prokaryotic ubiquitin-like protein]-gamma-L-glutamyl)-[protein]-L-lysine.. Its pathway is protein degradation; proteasomal Pup-dependent pathway. It participates in protein modification; protein pupylation. Its function is as follows. Catalyzes the covalent attachment of the prokaryotic ubiquitin-like protein modifier Pup to the proteasomal substrate proteins, thereby targeting them for proteasomal degradation. This tagging system is termed pupylation. The ligation reaction involves the side-chain carboxylate of the C-terminal glutamate of Pup and the side-chain amino group of a substrate lysine. This Parafrankia sp. (strain EAN1pec) protein is Pup--protein ligase.